The sequence spans 473 residues: B box and SPRY domain-containing protein (473 aa).

The disordered stretch occupies residues 1-69; sequence MSADVSGTES…PKQGSERSQL (69 aa). A compositionally biased stretch (pro residues) spans 35–51; that stretch reads KPGPGPEPRPESGPEPG. Residues 65-113 form a B box-type zinc finger; that stretch reads ERSQLCPEHFEPLSWFCLSERRPVCATCAGFGGRCHRHRIRRAEEHAEE. Residues 259–455 form the B30.2/SPRY domain; that stretch reads SPLLTQLWAA…ISIVRGPLAT (197 aa).

In terms of assembly, interacts with YWHAZ/14-3-3 protein zeta. Interacts with TRPV5 and TRPV6. As to expression, according to PubMed:10978534, testis-specific. According to PubMed:16371431, broadly expressed.

It is found in the cytoplasm. The protein localises to the membrane. May regulate epithelial calcium transport by inhibiting TRPV5 activity. This is B box and SPRY domain-containing protein (Bspry) from Mus musculus (Mouse).